The sequence spans 289 residues: MDKVKIALQYMLPKHLLSRLVGKLAAAEAGTLTTAAIKWFIKQYKIDMSEAAQSEPQAYKSFNDFFTRALKPGIRPINQHTHIMVHPVDGAVSQLGPIKEGRIFQAKGHHYSSLTLLGDQAQDAKRFEGGDFATIYLAPKDYHRIHMPIKGTLSKMTYVPGELFSVNPLTARHVPGLFARNERVVAIFETEHGPLAMVLVGATIVASIETVWAGTITPPTGKQVFTWEYPTVGPDAITLDKGDEMGRFKLGSTVVMLFAKDAIDTFAEGVEAEAVTRMGQAFANLNNPK.

Catalysis depends on charge relay system; for autoendoproteolytic cleavage activity residues D89, H146, and S252. The Schiff-base intermediate with substrate; via pyruvic acid; for decarboxylase activity role is filled by S252. S252 is subject to Pyruvic acid (Ser); by autocatalysis.

This sequence belongs to the phosphatidylserine decarboxylase family. PSD-B subfamily. Prokaryotic type I sub-subfamily. In terms of assembly, heterodimer of a large membrane-associated beta subunit and a small pyruvoyl-containing alpha subunit. It depends on pyruvate as a cofactor. Post-translationally, is synthesized initially as an inactive proenzyme. Formation of the active enzyme involves a self-maturation process in which the active site pyruvoyl group is generated from an internal serine residue via an autocatalytic post-translational modification. Two non-identical subunits are generated from the proenzyme in this reaction, and the pyruvate is formed at the N-terminus of the alpha chain, which is derived from the carboxyl end of the proenzyme. The autoendoproteolytic cleavage occurs by a canonical serine protease mechanism, in which the side chain hydroxyl group of the serine supplies its oxygen atom to form the C-terminus of the beta chain, while the remainder of the serine residue undergoes an oxidative deamination to produce ammonia and the pyruvoyl prosthetic group on the alpha chain. During this reaction, the Ser that is part of the protease active site of the proenzyme becomes the pyruvoyl prosthetic group, which constitutes an essential element of the active site of the mature decarboxylase.

It localises to the cell membrane. It carries out the reaction a 1,2-diacyl-sn-glycero-3-phospho-L-serine + H(+) = a 1,2-diacyl-sn-glycero-3-phosphoethanolamine + CO2. The protein operates within phospholipid metabolism; phosphatidylethanolamine biosynthesis; phosphatidylethanolamine from CDP-diacylglycerol: step 2/2. Functionally, catalyzes the formation of phosphatidylethanolamine (PtdEtn) from phosphatidylserine (PtdSer). The sequence is that of Phosphatidylserine decarboxylase proenzyme from Shewanella sp. (strain W3-18-1).